A 237-amino-acid chain; its full sequence is Phosphoribosylaminoimidazole-succinocarboxamide synthase (237 aa).

This sequence belongs to the SAICAR synthetase family.

The catalysed reaction is 5-amino-1-(5-phospho-D-ribosyl)imidazole-4-carboxylate + L-aspartate + ATP = (2S)-2-[5-amino-1-(5-phospho-beta-D-ribosyl)imidazole-4-carboxamido]succinate + ADP + phosphate + 2 H(+). Its pathway is purine metabolism; IMP biosynthesis via de novo pathway; 5-amino-1-(5-phospho-D-ribosyl)imidazole-4-carboxamide from 5-amino-1-(5-phospho-D-ribosyl)imidazole-4-carboxylate: step 1/2. The polypeptide is Phosphoribosylaminoimidazole-succinocarboxamide synthase (Cronobacter sakazakii (strain ATCC BAA-894) (Enterobacter sakazakii)).